A 250-amino-acid chain; its full sequence is MWIGVISLFPEMFRAITDYGVTGRAVKNGLLSIECWNPRDFTYDRHRTVDDRPYGGGPGMLMMVQPLREAIHAAKTAAGEGAKVIYLSPQGRKLNQQGVCELATNEKLILICGRYEGIDERVIQTEIDEEWSIGDYVLSGGEIPAMTMIDSVSRFIPGVLGHQASAEEDSFADGLLDCPHYTRPEVLDGMEVPPVLLSGNHAEINRWRMKQSLGRTWLRRPELLENLALTDEQRILLTEFQREHLTEATN.

Residues glycine 113 and 133-138 contribute to the S-adenosyl-L-methionine site; that span reads IGDYVL.

The protein belongs to the RNA methyltransferase TrmD family. In terms of assembly, homodimer.

The protein localises to the cytoplasm. The catalysed reaction is guanosine(37) in tRNA + S-adenosyl-L-methionine = N(1)-methylguanosine(37) in tRNA + S-adenosyl-L-homocysteine + H(+). Functionally, specifically methylates guanosine-37 in various tRNAs. This Photorhabdus laumondii subsp. laumondii (strain DSM 15139 / CIP 105565 / TT01) (Photorhabdus luminescens subsp. laumondii) protein is tRNA (guanine-N(1)-)-methyltransferase.